The chain runs to 126 residues: Small ribosomal subunit protein uS12 (126 aa).

The tract at residues 1–26 (MPTINQLVRKGRASETTKSKSPALQD) is disordered. A 3-methylthioaspartic acid modification is found at aspartate 89. The tract at residues 102-126 (LDTQGVKDRRQARSKYGAKRAKAAK) is disordered. The segment covering 113-126 (ARSKYGAKRAKAAK) has biased composition (basic residues).

This sequence belongs to the universal ribosomal protein uS12 family. In terms of assembly, part of the 30S ribosomal subunit. Contacts proteins S8 and S17. May interact with IF1 in the 30S initiation complex.

Functionally, with S4 and S5 plays an important role in translational accuracy. Interacts with and stabilizes bases of the 16S rRNA that are involved in tRNA selection in the A site and with the mRNA backbone. Located at the interface of the 30S and 50S subunits, it traverses the body of the 30S subunit contacting proteins on the other side and probably holding the rRNA structure together. The combined cluster of proteins S8, S12 and S17 appears to hold together the shoulder and platform of the 30S subunit. This is Small ribosomal subunit protein uS12 from Burkholderia mallei (strain ATCC 23344).